A 201-amino-acid polypeptide reads, in one-letter code: Small ribosomal subunit protein uS4c (201 aa).

The interval glycine 20 to glutamine 43 is disordered. The region spanning methionine 89 to asparagine 150 is the S4 RNA-binding domain.

This sequence belongs to the universal ribosomal protein uS4 family. In terms of assembly, part of the 30S ribosomal subunit. Contacts protein S5. The interaction surface between S4 and S5 is involved in control of translational fidelity.

It localises to the plastid. The protein localises to the chloroplast. In terms of biological role, one of the primary rRNA binding proteins, it binds directly to 16S rRNA where it nucleates assembly of the body of the 30S subunit. Functionally, with S5 and S12 plays an important role in translational accuracy. This chain is Small ribosomal subunit protein uS4c (rps4), found in Populus alba (White poplar).